Reading from the N-terminus, the 168-residue chain is HTH-type transcriptional regulator IscR (168 aa).

One can recognise an HTH rrf2-type domain in the interval 2–131; that stretch reads KLTSKGRYAV…NNITLGELMS (130 aa). Positions 28 to 51 form a DNA-binding region, H-T-H motif; it reads LADISERQGISLSYLEQLFSKLRK. Cysteine 92, cysteine 98, and cysteine 104 together coordinate [2Fe-2S] cluster.

[2Fe-2S] cluster is required as a cofactor.

In terms of biological role, regulates the transcription of several operons and genes involved in the biogenesis of Fe-S clusters and Fe-S-containing proteins. This is HTH-type transcriptional regulator IscR from Vibrio vulnificus (strain CMCP6).